The chain runs to 625 residues: 1-deoxy-D-xylulose-5-phosphate synthase (625 aa).

Thiamine diphosphate is bound by residues His-80 and 121 to 123 (GHS). Asp-152 is a binding site for Mg(2+). Thiamine diphosphate-binding positions include 153 to 154 (GA), Asn-181, Tyr-288, and Glu-370. Asn-181 provides a ligand contact to Mg(2+).

Belongs to the transketolase family. DXPS subfamily. As to quaternary structure, homodimer. Mg(2+) serves as cofactor. Thiamine diphosphate is required as a cofactor.

It carries out the reaction D-glyceraldehyde 3-phosphate + pyruvate + H(+) = 1-deoxy-D-xylulose 5-phosphate + CO2. It functions in the pathway metabolic intermediate biosynthesis; 1-deoxy-D-xylulose 5-phosphate biosynthesis; 1-deoxy-D-xylulose 5-phosphate from D-glyceraldehyde 3-phosphate and pyruvate: step 1/1. Catalyzes the acyloin condensation reaction between C atoms 2 and 3 of pyruvate and glyceraldehyde 3-phosphate to yield 1-deoxy-D-xylulose-5-phosphate (DXP). The polypeptide is 1-deoxy-D-xylulose-5-phosphate synthase (Alteromonas mediterranea (strain DSM 17117 / CIP 110805 / LMG 28347 / Deep ecotype)).